Reading from the N-terminus, the 550-residue chain is Mitochondrial distribution and morphology protein 34 (550 aa).

Residues 1–208 (MAFNFNWSPL…CPEQMSKEDH (208 aa)) enclose the SMP-LTD domain. Disordered regions lie at residues 294-313 (VDKP…LVKS), 358-505 (RNAK…ILEQ), and 519-550 (VYDE…TAAS). Residues 300–310 (SSTTPLTTPSL) are compositionally biased toward low complexity. The segment covering 364-376 (ANRKKKTRVVNLR) has biased composition (basic residues). 2 stretches are compositionally biased toward polar residues: residues 391-407 (MSDS…TMSD) and 458-467 (AEISQPQVAR). Over residues 481-495 (SENDKRSDSKRRGPR) the composition is skewed to basic and acidic residues.

It belongs to the MDM34 family. Component of the ER-mitochondria encounter structure (ERMES) or MDM complex, composed of MMM1, MDM10, MDM12 and MDM34.

Its subcellular location is the mitochondrion outer membrane. Functionally, component of the ERMES/MDM complex, which serves as a molecular tether to connect the endoplasmic reticulum (ER) and mitochondria. Components of this complex are involved in the control of mitochondrial shape and protein biogenesis, and function in nonvesicular lipid trafficking between the ER and mitochondria. MDM34 is required for the interaction of the ER-resident membrane protein MMM1 and the outer mitochondrial membrane-resident beta-barrel protein MDM10. The polypeptide is Mitochondrial distribution and morphology protein 34 (Pyricularia oryzae (strain 70-15 / ATCC MYA-4617 / FGSC 8958) (Rice blast fungus)).